A 471-amino-acid chain; its full sequence is N(6)-adenine-specific methyltransferase METTL4 (471 aa).

This sequence belongs to the MT-A70-like family.

It is found in the nucleus. The catalysed reaction is a 2'-O-methyladenosine in U2 snRNA + S-adenosyl-L-methionine = an N(6)-methyl-2'-O-methyladenosine in U2 snRNA + S-adenosyl-L-homocysteine + H(+). It carries out the reaction a 2'-deoxyadenosine in DNA + S-adenosyl-L-methionine = an N(6)-methyl-2'-deoxyadenosine in DNA + S-adenosyl-L-homocysteine + H(+). Functionally, n(6)-adenine-specific methyltransferase that can methylate both RNAs and DNA. Acts as a N(6)-adenine-specific RNA methyltransferase by catalyzing formation of N6,2'-O-dimethyladenosine (m6A(m)) on internal positions of U2 small nuclear RNA (snRNA): methylates the 6th position of adenine residues with a pre-deposited 2'-O-methylation. Internal m6A(m) methylation of snRNAs regulates RNA splicing. Also able to act as a N(6)-adenine-specific DNA methyltransferase by mediating methylation of DNA on the 6th position of adenine (N(6)-methyladenosine). The existence of N(6)-methyladenosine (m6A) on DNA is however unclear in mammals, and additional evidences are required to confirm the role of the N(6)-adenine-specific DNA methyltransferase activity of METTL4 in vivo. Acts as a regulator of mitochondrial transcript levels and mitochondrial DNA (mtDNA) copy number by mediating mtDNA N(6)-methylation: m6A on mtDNA reduces transcription by repressing TFAM DNA-binding and bending. N(6)-methyladenosine deposition by METTL4 regulates Polycomb silencing by triggering ubiquitination and degradation of sensor proteins ASXL1 and MPND, leading to inactivation of the PR-DUB complex and subsequent preservation of Polycomb silencing. The chain is N(6)-adenine-specific methyltransferase METTL4 from Mus musculus (Mouse).